The sequence spans 264 residues: 5'-nucleotidase SurE (264 aa).

A divalent metal cation contacts are provided by D8, D9, S41, and N98.

Belongs to the SurE nucleotidase family. A divalent metal cation serves as cofactor.

It is found in the cytoplasm. The catalysed reaction is a ribonucleoside 5'-phosphate + H2O = a ribonucleoside + phosphate. Nucleotidase that shows phosphatase activity on nucleoside 5'-monophosphates. The protein is 5'-nucleotidase SurE of Carboxydothermus hydrogenoformans (strain ATCC BAA-161 / DSM 6008 / Z-2901).